The sequence spans 703 residues: Phenylalanine aminomutase (L-beta-phenylalanine forming) (703 aa).

The active-site Proton donor/acceptor is Y79. The 5-imidazolinone (Ala-Gly) cross-link spans 177-179 (ASG). S178 is modified (2,3-didehydroalanine (Ser)).

Belongs to the PAL/histidase family. Post-translationally, contains an active site 4-methylidene-imidazol-5-one (MIO), which is formed autocatalytically by cyclization and dehydration of residues Ala-Ser-Gly.

The enzyme catalyses L-phenylalanine = L-beta-phenylalanine. The protein operates within mycotoxin biosynthesis. In terms of biological role, phenylalanine aminomutase; part of the gene cluster that mediates the biosynthesis of the mycotoxin cyclochlorotine, a hepatotoxic and carcinogenic cyclic chlorinated pentapeptide. Within the pathway, cctP1 provides the uncommon building block beta-Phe from Phe. The NRPS cctN initially catalyzes the condensation of L-serine (Ser), Pro, L-2-aminobutyrate (2Abu), Ser, and beta-Phe in this order to produce isocyclotine. After the dichlorination of Pro2 catalyzed by cctP2 to produce isocyclochlorotine, the cctO-mediated transacylation of isocyclochlorotine can furnish cyclochlorotine. The subsequent hydroxylation of cyclochlorotine by cctR yields hydroxycyclochlorotine as the final product. CctP1 probably acts as a phenylalanine aminomutase and provides the uncommon building block beta-Phe. Furthermore, 2Abu can be synthesized from threonine by one of the threonine dehydratases and transaminases localized outside of the cluster. The functions of the remaining proteins encoded by the cluster, cctM and cctT, have not been identified yet. This chain is Phenylalanine aminomutase (L-beta-phenylalanine forming), found in Talaromyces islandicus (Penicillium islandicum).